Reading from the N-terminus, the 152-residue chain is MTITELVLILFIAALLAFAIYDQFIMPRRNGPTLLAIPLLRRGRIDSVIFVGLIVILIYNNVTNHGAQITTWLLSALALMGFYIFWIRVPKIIFKQKGFFFANVWIEYSRIKAMNLSEDGVLVMQLEQRRLLIRVRNIDDLEKIYKLLVSTQ.

3 consecutive transmembrane segments (helical) span residues 6–26 (LVLILFIAALLAFAIYDQFIM), 45–65 (IDSVIFVGLIVILIYNNVTNH), and 67–87 (AQITTWLLSALALMGFYIFWI).

It belongs to the UPF0266 family.

It localises to the cell inner membrane. The sequence is that of UPF0266 membrane protein YobD from Escherichia fergusonii (strain ATCC 35469 / DSM 13698 / CCUG 18766 / IAM 14443 / JCM 21226 / LMG 7866 / NBRC 102419 / NCTC 12128 / CDC 0568-73).